A 446-amino-acid polypeptide reads, in one-letter code: MVKKRLPSNDTVFRFETPGSPRKANVEASRSSTDSPSSVFFSSEAENGVEEKKKACRSPTAQSPTPSVEAESPDQKKIISLRSKSSFDGASLASDKNDCKTESKNDPKTERKKSSSSSQYKANMHFHKLFLSVPTEEPLKQSFTCALQKEILYQGKLFVSENWICFHSKVFGKDTKISIPAFSVTLIKKTKTALLVPNALIIATVTDRYIFVSLLSRDSTYKLLKSVCGHLENTSVGNSPNPSSAENSFRADRPSSLPLDFNDEFSDLDGVVQQRRQDMEGYSSSGSQTPESENSRDFHVTESQTVLNVSKGEAKPTRADAHVNRVPEGKAKSLPAQGLSETVGILHKVKSQKCPMLHHILIFYAIVVCALIISTFYMRYRINTLEEQLGLLTSIVDTHNTEQAAPSGLGSQVQFNVEVLCQELTANIVKLEKIQNNLQKLLENGD.

The residue at position 1 (methionine 1) is an N-acetylmethionine. Residues 1–120 (MVKKRLPSND…RKKSSSSSQY (120 aa)) form a disordered region. The span at 29–43 (SRSSTDSPSSVFFSS) shows a compositional bias: low complexity. Residues 95–113 (DKNDCKTESKNDPKTERKK) show a composition bias toward basic and acidic residues. The 68-residue stretch at 124–191 (MHFHKLFLSV…FSVTLIKKTK (68 aa)) folds into the GRAM domain. Polar residues predominate over residues 234 to 247 (TSVGNSPNPSSAEN). A disordered region spans residues 234–253 (TSVGNSPNPSSAENSFRADR). Serine 239, serine 256, and serine 266 each carry phosphoserine. Residues 276–298 (RQDMEGYSSSGSQTPESENSRDF) are disordered. Residues 282–292 (YSSSGSQTPES) are compositionally biased toward polar residues.

In Pongo abelii (Sumatran orangutan), this protein is GRAM domain-containing protein 2B (GRAMD2B).